The sequence spans 152 residues: Ribosome maturation factor RimP (152 aa).

Belongs to the RimP family.

It localises to the cytoplasm. Its function is as follows. Required for maturation of 30S ribosomal subunits. This chain is Ribosome maturation factor RimP, found in Teredinibacter turnerae (strain ATCC 39867 / T7901).